The sequence spans 138 residues: Phospholipase A2 group V (138 aa).

Residues 1 to 20 form the signal peptide; it reads MKGLLPLAWFLACSVPAVQG. Cystine bridges form between Cys46-Cys137, Cys48-Cys64, Cys63-Cys117, Cys70-Cys110, Cys79-Cys103, and Cys97-Cys108. Ca(2+) is bound by residues Tyr47, Gly49, and Gly51. The active site involves His67. A Ca(2+)-binding site is contributed by Asp68. The active site involves Asp111.

The protein belongs to the phospholipase A2 family. Requires Ca(2+) as cofactor. This enzyme lacks one of the seven disulfide bonds found in similar PLA2 proteins. In terms of tissue distribution, heart, placenta and less abundantly, in lung. Detected in the outer and inner plexiform layers of the retina (at protein level). Expressed in monocytes and macrophages.

It is found in the secreted. Its subcellular location is the cell membrane. The protein localises to the cytoplasmic vesicle. The protein resides in the phagosome. It localises to the recycling endosome. It is found in the golgi apparatus. Its subcellular location is the cis-Golgi network. The protein localises to the trans-Golgi network. It catalyses the reaction a 1,2-diacyl-sn-glycero-3-phosphocholine + H2O = a 1-acyl-sn-glycero-3-phosphocholine + a fatty acid + H(+). It carries out the reaction 1-hexadecanoyl-2-(9Z-octadecenoyl)-sn-glycero-3-phosphocholine + H2O = 1-hexadecanoyl-sn-glycero-3-phosphocholine + (9Z)-octadecenoate + H(+). The enzyme catalyses 1-hexadecanoyl-2-(5Z,8Z,11Z,14Z-eicosatetraenoyl)-sn-glycero-3-phosphocholine + H2O = 1-hexadecanoyl-sn-glycero-3-phosphocholine + (5Z,8Z,11Z,14Z)-eicosatetraenoate + H(+). The catalysed reaction is 1-hexadecanoyl-2-(9Z,12Z-octadecadienoyl)-sn-glycero-3-phosphoethanolamine + H2O = 1-hexadecanoyl-sn-glycero-3-phosphoethanolamine + (9Z,12Z)-octadecadienoate + H(+). It catalyses the reaction 1-hexadecanoyl-2-(5Z,8Z,11Z,14Z-eicosatetraenoyl)-sn-glycero-3-phosphoethanolamine + H2O = 1-hexadecanoyl-sn-glycero-3-phosphoethanolamine + (5Z,8Z,11Z,14Z)-eicosatetraenoate + H(+). It carries out the reaction 1-octadecanoyl-2-(5Z,8Z,11Z,14Z-eicosatetraenoyl)-sn-glycero-3-phospho-(1D-myo-inositol) + H2O = 1-octadecanoyl-sn-glycero-3-phospho-(1D-myo-inositol) + (5Z,8Z,11Z,14Z)-eicosatetraenoate + H(+). The enzyme catalyses 1-hexadecanoyl-2-(9Z-octadecenoyl)-sn-glycero-3-phosphoglycerol + H2O = 1-hexadecanoyl-sn-glycero-3-phosphoglycerol + (9Z)-octadecenoate + H(+). The catalysed reaction is N-hexadecanoyl-1,2-di-(9Z-octadecenoyl)-sn-glycero-3-phosphoethanolamine + H2O = N-hexadecanoyl-1-(9Z-octadecenoyl)-sn-glycero-3-phosphoethanolamine + (9Z)-octadecenoate + H(+). It catalyses the reaction 1'-[1,2-di-(9Z-octadecenoyl)-sn-glycero-3-phospho]-3'-[1-(9Z-octadecenoyl)-sn-glycero-3-phospho]-glycerol + H2O = 1',3'-bis-[1-(9Z-octadecenoyl)-sn-glycero-3-phospho]-glycerol + (9Z)-octadecenoate + H(+). It carries out the reaction 1',3'-bis[1,2-di-(9Z-octadecenoyl)-sn-glycero-3-phospho]-glycerol + H2O = 1'-[1,2-di-(9Z-octadecenoyl)-sn-glycero-3-phospho]-3'-[1-(9Z-octadecenoyl)-sn-glycero-3-phospho]-glycerol + (9Z)-octadecenoate + H(+). It functions in the pathway lipid metabolism; phospholipid metabolism. The protein operates within lipid metabolism; leukotriene B4 biosynthesis. It participates in lipid metabolism; leukotriene C4 biosynthesis. Its activity is regulated as follows. Activated by cardiolipin. Secretory calcium-dependent phospholipase A2 that primarily targets extracellular phospholipids. Hydrolyzes the ester bond of the fatty acyl group attached at sn-2 position of phospholipids (phospholipase A2 activity), preferentially releasing fatty acyl groups with a low degree of unsaturation such as oleoyl (C18:1) and linoleoyl (C18:2) groups. Hydrolyzes low-density lipoprotein (LDL) phospholipids releasing unsaturated fatty acids that drive macrophage polarization toward an M2 phenotype. May act in an autocrine and paracrine manner. Contributes to lipid remodeling of cellular membranes at different subcellular locations and generation of lipid mediators involved in pathogen clearance. Cleaves sn-2 fatty acyl chains of cardiolipin, a major component of the inner membrane of mitochondria and bacterial membranes. Promotes phagocytosis of bacteria in macrophages through production of lysophosphatidylethanolamines. Displays bactericidal activity against Gram-positive bacteria by directly hydrolyzing phospholipids of the bacterial membrane. Promotes phagocytosis and killing of ingested fungi likely through controlling phagosome-lysosome fusion and phagosome maturation. Plays a role in biosynthesis of cysteinyl leukotrienes (CysLTs) in myeloid cells. In eosinophils, triggers perinuclear arachidonate release and LTC4 synthesis in a PLA2G4A-independent way. In neutrophils, amplifies CysLTs biosynthesis initiated by PLA2G4A. Promotes immune complex clearance in macrophages via stimulating synthesis of CysLTs, which act through CYSLTR1 to trigger phagocytosis. May regulate antigen processing in antigen-presenting cells. In pulmonary macrophages regulates IL33 production required for activation of group 2 innate lymphoid cells. May play a role in the biosynthesis of N-acyl ethanolamines that regulate energy metabolism. Hydrolyzes N-acyl phosphatidylethanolamines to N-acyl lysophosphatidylethanolamines, which are further cleaved by a lysophospholipase D to release N-acyl ethanolamines. This chain is Phospholipase A2 group V (PLA2G5), found in Homo sapiens (Human).